A 355-amino-acid polypeptide reads, in one-letter code: 45 kDa calcium-binding protein (355 aa).

The N-terminal stretch at 1-29 (MASRQAPLCGLAPCCLWLLGVVLLMNASA) is a signal peptide. Asn-33 carries N-linked (GlcNAc...) asparagine glycosylation. EF-hand domains follow at residues 91–126 (KSRR…KTAE) and 130–165 (EAVA…TKGH). Ser-92 bears the Phosphoserine mark. The Ca(2+) site is built by Asp-104, Asn-106, Asp-108, Arg-110, Glu-115, Asp-143, Asp-145, Asp-147, His-149, and Glu-154. Phosphothreonine occurs at positions 186 and 210. EF-hand domains follow at residues 226-261 (MLQF…TVEN), 271-306 (WVRD…MNEF), and 307-342 (SALN…FTGS). 5 residues coordinate Ca(2+): Asp-239, Asp-241, Asp-243, Lys-245, and Glu-250. Thr-258 is subject to Phosphothreonine. 3 residues coordinate Ca(2+): Asp-284, Asn-286, and Asp-288. Thr-292 carries the post-translational modification Phosphothreonine. Ca(2+)-binding residues include Glu-295, Asp-320, Asn-322, Asn-324, Tyr-326, and Glu-331. The necessary for intracellular retention in Golgi apparatus lumen stretch occupies residues 302–355 (PMNEFSALNEAKQMIAIADENQNHYLEPEEVLKYSEFFTGSKLVDYARSVHEEF).

It belongs to the CREC family.

The protein localises to the golgi apparatus lumen. In terms of biological role, may regulate calcium-dependent activities in the endoplasmic reticulum lumen or post-ER compartment. The protein is 45 kDa calcium-binding protein (SDF4) of Bos taurus (Bovine).